The primary structure comprises 261 residues: Cytochrome c oxidase subunit 3 (261 aa).

Topologically, residues 1–15 (MVHQSHAYHMLKPSP) are mitochondrial matrix. The helical transmembrane segment at 16-34 (WPLTGALSALLMTSGLAMW) threads the bilayer. Residues 35-40 (FHFHST) are Mitochondrial intermembrane-facing. A helical transmembrane segment spans residues 41-66 (TLLLTGMLTNALTMYQWWRDVVREST). The Mitochondrial matrix segment spans residues 67-72 (YQGHHT). Residues 73–105 (LPVQKGLRYGMILFITSEVFFFAGFFWAFYHSS) form a helical membrane-spanning segment. Over 106–128 (LAPTPQLGGHWPPTGITPLNPLE) the chain is Mitochondrial intermembrane. Residues 129-152 (VPLLNTAVLLASGVSITWAHHSLM) traverse the membrane as a helical segment. Topologically, residues 153–155 (ENN) are mitochondrial matrix. The chain crosses the membrane as a helical span at residues 156 to 183 (RTQMIQALLITILLGIYFTLLQASEYIE). Topologically, residues 184 to 190 (APFTISD) are mitochondrial intermembrane. The helical transmembrane segment at 191 to 223 (GIYGSTFFMTTGFHGLHVIIGSTFLTVCLSCQL) threads the bilayer. Residues 224–232 (LFHFTSKHH) lie on the Mitochondrial matrix side of the membrane. Residues 233–256 (FGFEAAAWYWHFVDVVWLFLYVSI) form a helical membrane-spanning segment. At 257-261 (YWWGS) the chain is on the mitochondrial intermembrane side.

Belongs to the cytochrome c oxidase subunit 3 family. In terms of assembly, component of the cytochrome c oxidase (complex IV, CIV), a multisubunit enzyme composed of 14 subunits. The complex is composed of a catalytic core of 3 subunits MT-CO1, MT-CO2 and MT-CO3, encoded in the mitochondrial DNA, and 11 supernumerary subunits COX4I, COX5A, COX5B, COX6A, COX6B, COX6C, COX7A, COX7B, COX7C, COX8 and NDUFA4, which are encoded in the nuclear genome. The complex exists as a monomer or a dimer and forms supercomplexes (SCs) in the inner mitochondrial membrane with NADH-ubiquinone oxidoreductase (complex I, CI) and ubiquinol-cytochrome c oxidoreductase (cytochrome b-c1 complex, complex III, CIII), resulting in different assemblies (supercomplex SCI(1)III(2)IV(1) and megacomplex MCI(2)III(2)IV(2)).

It localises to the mitochondrion inner membrane. It carries out the reaction 4 Fe(II)-[cytochrome c] + O2 + 8 H(+)(in) = 4 Fe(III)-[cytochrome c] + 2 H2O + 4 H(+)(out). Functionally, component of the cytochrome c oxidase, the last enzyme in the mitochondrial electron transport chain which drives oxidative phosphorylation. The respiratory chain contains 3 multisubunit complexes succinate dehydrogenase (complex II, CII), ubiquinol-cytochrome c oxidoreductase (cytochrome b-c1 complex, complex III, CIII) and cytochrome c oxidase (complex IV, CIV), that cooperate to transfer electrons derived from NADH and succinate to molecular oxygen, creating an electrochemical gradient over the inner membrane that drives transmembrane transport and the ATP synthase. Cytochrome c oxidase is the component of the respiratory chain that catalyzes the reduction of oxygen to water. Electrons originating from reduced cytochrome c in the intermembrane space (IMS) are transferred via the dinuclear copper A center (CU(A)) of subunit 2 and heme A of subunit 1 to the active site in subunit 1, a binuclear center (BNC) formed by heme A3 and copper B (CU(B)). The BNC reduces molecular oxygen to 2 water molecules using 4 electrons from cytochrome c in the IMS and 4 protons from the mitochondrial matrix. The protein is Cytochrome c oxidase subunit 3 (MT-CO3) of Pongo pygmaeus (Bornean orangutan).